Reading from the N-terminus, the 973-residue chain is 109 kDa U5 small nuclear ribonucleoprotein component GFL (973 aa).

Positions 1–40 (MDGSLYGECGNYIGPEIESDRDSDDSVEDEDLQEPGGSNG) are disordered. Over residues 17-33 (IESDRDSDDSVEDEDLQ) the composition is skewed to acidic residues. The region spanning 122 to 408 (ALVRNVALVG…LGVTLSNSAY (287 aa)) is the tr-type G domain. Residues 131 to 138 (GHLQHGKT) form a G1 region. A GTP-binding site is contributed by 131–138 (GHLQHGKT). Residues 175–179 (NISIK) form a G2 region. Residues 201-204 (DTPG) form a G3 region. Residues 201-205 (DTPGN) and 255-258 (NKVD) contribute to the GTP site. Residues 255-258 (NKVD) form a G4 region. The interval 381 to 383 (YSQ) is G5.

The protein belongs to the TRAFAC class translation factor GTPase superfamily. Classic translation factor GTPase family. Expressed in flower buds, open flowers and siliques. Expressed at low levels in rosettes leaves, cauline leaves and stems.

The protein localises to the nucleus speckle. Its function is as follows. Splicing factor involved in pre-mRNA splicing and component of the spliceosome. In Arabidopsis thaliana (Mouse-ear cress), this protein is 109 kDa U5 small nuclear ribonucleoprotein component GFL.